A 271-amino-acid chain; its full sequence is Phosphonoacetaldehyde hydrolase (271 aa).

Asp12 functions as the Nucleophile in the catalytic mechanism. Residues Asp12 and Ala14 each coordinate Mg(2+). Lys54 acts as the Schiff-base intermediate with substrate in catalysis. Residue Asp188 coordinates Mg(2+).

The protein belongs to the HAD-like hydrolase superfamily. PhnX family. Homodimer. The cofactor is Mg(2+).

The catalysed reaction is phosphonoacetaldehyde + H2O = acetaldehyde + phosphate + H(+). Functionally, involved in phosphonate degradation. The chain is Phosphonoacetaldehyde hydrolase from Vibrio campbellii (strain ATCC BAA-1116).